The chain runs to 475 residues: MSPQTETKAGVGFKAGVKDYRLTYYTPDYETKDTDILAAFRMTPQPGVPPEEAGAAVAAESSTGTWTTVWTDGLTSLDRYKGRCYDIEPVAGEENQYIAYVAYPLDLFEEGSVTNMFTSIVGNVFGFKALRALRLEDLRIPPAYSKTFQGPPHGIQVERDKLNKYGRPLLGCTIKPKLGLSAKNYGRAVYECLRGGLDFTKDDENVNSQPFMRWRDRFLFVAEAIFKSQAETGEIKGHYLNATAGTCEEMMKRAHFARELGMPIVMHDYLTGGFTANTTLARYCRDNGLLLHIHRAMHAVIDRQRNHGIHFRVLAKALRMSGGDHIHSGTVVGKLEGEREVTLGFVDLLRDDYIEKDRSRGIYFTQDWVSMPGVLPVASGGIHVWHMSALTEIFGDDSVLQFGGGTLGHPWGNAPGAVANRVALEACVQARNEGRDLAREGNDIIREASKWSPELAAACEVWKEIKFVFETIDTL.

Positions 1–2 (MS) are excised as a propeptide. N-acetylproline is present on proline 3. Position 14 is an N6,N6,N6-trimethyllysine (lysine 14). Residues asparagine 123 and threonine 173 each coordinate substrate. The Proton acceptor role is filled by lysine 175. A substrate-binding site is contributed by lysine 177. 3 residues coordinate Mg(2+): lysine 201, aspartate 203, and glutamate 204. Lysine 201 is subject to N6-carboxylysine. The active-site Proton acceptor is the histidine 294. Residues arginine 295, histidine 327, and serine 379 each contribute to the substrate site.

This sequence belongs to the RuBisCO large chain family. Type I subfamily. In terms of assembly, heterohexadecamer of 8 large chains and 8 small chains; disulfide-linked. The disulfide link is formed within the large subunit homodimers. It depends on Mg(2+) as a cofactor. Post-translationally, the disulfide bond which can form in the large chain dimeric partners within the hexadecamer appears to be associated with oxidative stress and protein turnover.

It localises to the plastid. It is found in the chloroplast. It catalyses the reaction 2 (2R)-3-phosphoglycerate + 2 H(+) = D-ribulose 1,5-bisphosphate + CO2 + H2O. The catalysed reaction is D-ribulose 1,5-bisphosphate + O2 = 2-phosphoglycolate + (2R)-3-phosphoglycerate + 2 H(+). RuBisCO catalyzes two reactions: the carboxylation of D-ribulose 1,5-bisphosphate, the primary event in carbon dioxide fixation, as well as the oxidative fragmentation of the pentose substrate in the photorespiration process. Both reactions occur simultaneously and in competition at the same active site. The chain is Ribulose bisphosphate carboxylase large chain from Anthoceros angustus (Hornwort).